A 466-amino-acid polypeptide reads, in one-letter code: Collagenase 3 (466 aa).

Positions 1 to 13 (ATFFLLSWTHCWS) are cleaved as a signal peptide. A propeptide spans 14-98 (LPLPYGDDDD…PRCGVPDVGV (85 aa)) (activation peptide). Residues 89–96 (PRCGVPDV) carry the Cysteine switch motif. C91 contacts Zn(2+). An N-linked (GlcNAc...) asparagine glycan is attached at N112. A Ca(2+)-binding site is contributed by D123. The N-linked (GlcNAc...) asparagine glycan is linked to N147. D157 provides a ligand contact to Ca(2+). Residues H167 and D169 each coordinate Zn(2+). The interval 171–241 (YPFDGPSGLL…GALMFPIYTY (71 aa)) is interaction with TIMP2. 4 residues coordinate Ca(2+): D174, G175, S177, and L179. H182 provides a ligand contact to Zn(2+). Ca(2+) is bound by residues N189, G191, and D193. Residue H195 coordinates Zn(2+). Residues D197, D198, and E200 each coordinate Ca(2+). H217 serves as a coordination point for Zn(2+). E218 is an active-site residue. H221, H227, and M235 together coordinate Zn(2+). Residues 258–279 (QSLYGPGDEDPNPKHPKTPEKC) are disordered. The segment at 263–466 (PGDEDPNPKH…VMPTNSLLWC (204 aa)) is interaction with collagen. Residues 268-279 (PNPKHPKTPEKC) are compositionally biased toward basic and acidic residues. Hemopexin repeat units lie at residues 276–325 (PEKC…WPEL), 326–372 (PNHV…GFPK), 374–422 (VKRL…FPGI), and 423–466 (GDKV…LLWC). C279 and C466 are disulfide-bonded. The Ca(2+) site is built by D286, I288, D330, and A332. Y361 carries the post-translational modification Phosphotyrosine; by PKDCC. 2 residues coordinate Ca(2+): S378 and A380. N404 carries N-linked (GlcNAc...) asparagine glycosylation. Residues D427 and V429 each coordinate Ca(2+).

The protein belongs to the peptidase M10A family. Requires Ca(2+) as cofactor. Zn(2+) is required as a cofactor. The proenzyme is activated by removal of the propeptide; this cleavage can be effected by other matrix metalloproteinases, such as MMP2, MMP3 and MMP14 and may involve several cleavage steps. Cleavage can also be autocatalytic, after partial maturation by another protease or after treatment with 4-aminophenylmercuric acetate (APMA) (in vitro). In terms of processing, N-glycosylated. Post-translationally, tyrosine phosphorylated by PKDCC/VLK.

The protein resides in the secreted. It is found in the extracellular space. The protein localises to the extracellular matrix. Functionally, plays a role in the degradation of extracellular matrix proteins including fibrillar collagen, fibronectin, TNC and ACAN. Cleaves triple helical collagens, including type I, type II and type III collagen, but has the highest activity with soluble type II collagen. Can also degrade collagen type IV, type XIV and type X. May also function by activating or degrading key regulatory proteins, such as TGFB1 and CCN2. Plays a role in wound healing, tissue remodeling, cartilage degradation, bone development, bone mineralization and ossification. Required for normal embryonic bone development and ossification. Plays a role in the healing of bone fractures via endochondral ossification. Plays a role in wound healing, probably by a mechanism that involves proteolytic activation of TGFB1 and degradation of CCN2. Plays a role in keratinocyte migration during wound healing. May play a role in cell migration and in tumor cell invasion. In Rattus norvegicus (Rat), this protein is Collagenase 3 (Mmp13).